Here is a 236-residue protein sequence, read N- to C-terminus: MQTHNNVDPQEIAKFEKMAATWWDPKGEFKPLHNLNPLRLNYIDQTAGGIFGKQVLDVGCGGGILSESMARIGANVTGLDMGDEPLDVARLHALETGVEINYIKNTAEAHRDEHRGQYDVVTCMEMLEHVPNPSSVIQACADMVKPGGYVFFSTINRNLRAYVETILGAEYLLKMLPIGTHDHNKFIRPSELIDLADNAELFCKDAVGITYNPITDIFRYTKSLEVNYMIATVKND.

S-adenosyl-L-methionine is bound by residues R39, G59, D80, and M124.

This sequence belongs to the methyltransferase superfamily. UbiG/COQ3 family.

It catalyses the reaction a 3-demethylubiquinol + S-adenosyl-L-methionine = a ubiquinol + S-adenosyl-L-homocysteine + H(+). The catalysed reaction is a 3-(all-trans-polyprenyl)benzene-1,2-diol + S-adenosyl-L-methionine = a 2-methoxy-6-(all-trans-polyprenyl)phenol + S-adenosyl-L-homocysteine + H(+). It functions in the pathway cofactor biosynthesis; ubiquinone biosynthesis. O-methyltransferase that catalyzes the 2 O-methylation steps in the ubiquinone biosynthetic pathway. The protein is Ubiquinone biosynthesis O-methyltransferase of Shewanella pealeana (strain ATCC 700345 / ANG-SQ1).